The primary structure comprises 226 residues: Putative integrase V10 (226 aa).

Residues R97, H174, and R177 contribute to the active site. Y210 acts as the O-(3'-phospho-DNA)-tyrosine intermediate in catalysis.

The protein belongs to the 'phage' integrase family.

May catalyze site-specific integration of viral genome into host or helper virus DNA. The sequence is that of Putative integrase V10 from Acanthamoeba polyphaga (Amoeba).